The sequence spans 65 residues: Conopeptide Vt3.2 (65 aa).

Positions 1 to 12 are cleaved as a signal peptide; the sequence is LLFPLATLQLNA. The propeptide occupies 13–48; it reads DQPVERNAENIQDLNPDKRFIFMPVPRRRGPYGSVH. A Serine amide modification is found at S64.

This sequence belongs to the conotoxin M superfamily. In terms of assembly, homodimer; disulfide-linked. As to expression, expressed by the venom duct.

The protein localises to the secreted. The sequence is that of Conopeptide Vt3.2 from Conus planorbis (Planorbis cone).